Reading from the N-terminus, the 642-residue chain is Eukaryotic translation initiation factor 2A (642 aa).

4 WD repeats span residues 69–115 (MKLS…KKDC), 186–224 (TYLI…ITKK), 289–331 (LTTG…HSLP), and 374–419 (FDAT…VFVK). Positions 485–593 (ISQHPSREAS…KETSPEEKKI (109 aa)) are disordered. 2 stretches are compositionally biased toward low complexity: residues 493–507 (ASSN…AGGA) and 563–583 (TSPD…PTNN). Residues Ser-564, Ser-567, and Ser-572 each carry the phosphoserine modification.

Belongs to the WD repeat EIF2A family. Post-translationally, ubiquitinated, probably leading to its degradation. May explain why it has a short half-life of 17 minutes.

Functions in the early steps of protein synthesis of a small number of specific mRNAs. Acts by directing the binding of methionyl-tRNAi to 40S ribosomal subunits. In contrast to the eIF-2 complex, it binds methionyl-tRNAi to 40S subunits in a codon-dependent manner, whereas the eIF-2 complex binds methionyl-tRNAi to 40S subunits in a GTP-dependent manner. Specifically associates with both 40S subunits and 80S ribosomes. This chain is Eukaryotic translation initiation factor 2A, found in Saccharomyces cerevisiae (strain ATCC 204508 / S288c) (Baker's yeast).